Here is a 342-residue protein sequence, read N- to C-terminus: Outer membrane porin C (342 aa).

This sequence belongs to the Gram-negative porin family. As to quaternary structure, homotrimer.

The protein localises to the cell outer membrane. Functionally, forms pores that allow passive diffusion of small molecules across the outer membrane. In R.aquatilis OmpC is involved in the adhesion to wheat roots. The sequence is that of Outer membrane porin C (ompC) from Rahnella aquatilis.